A 188-amino-acid chain; its full sequence is Succinate-acetate/proton symporter SatP (188 aa).

At 1–13 (MGNTKLANPAPLG) the chain is on the cytoplasmic side. Residues 14-34 (LMGFGMTTILLNLHNVGYFAL) traverse the membrane as a helical segment. Residue aspartate 35 is a topological domain, periplasmic. A helical transmembrane segment spans residues 36–56 (GIILAMGIFYGGIAQIFAGLL). Residues 57-63 (EYKKGNT) are Cytoplasmic-facing. Residues 64-84 (FGLTAFTSYGSFWLTLVAILL) form a helical membrane-spanning segment. The Periplasmic segment spans residues 85 to 97 (MPKLGLTDAPNAQ). A helical transmembrane segment spans residues 98–118 (FLGVYLGLWGVFTLFMFFGTL). Residues 119–122 (KGAR) lie on the Cytoplasmic side of the membrane. The chain crosses the membrane as a helical span at residues 123 to 143 (VLQFVFFSLTVLFALLAIGNI). The Periplasmic portion of the chain corresponds to 144-148 (AGNAA). The chain crosses the membrane as a helical span at residues 149 to 169 (IIHFAGWIGLICGASAIYLAM). Over 170–188 (GEVLNEQFGRTVLPIGESH) the chain is Cytoplasmic.

It belongs to the acetate uptake transporter (AceTr) (TC 2.A.96) family.

The protein localises to the cell inner membrane. Uptake of acetate and succinate. Transport is energetically dependent on the protonmotive force. The polypeptide is Succinate-acetate/proton symporter SatP (satP) (Escherichia coli O157:H7).